The sequence spans 831 residues: Prolactin receptor (831 aa).

An N-terminal signal peptide occupies residues 1 to 23 (MKQNLISSVQIILLLPLTTVGLT). At 24–438 (SQSFPGKPKI…EIPNDFRVKD (415 aa)) the chain is on the extracellular side. 4 Fibronectin type-III domains span residues 30–128 (KPKI…VQPG), 129–232 (SPVN…SPPE), 233–331 (KPTI…VQPD), and 332–433 (PPAN…IPND). Cys36 and Cys46 are oxidised to a cystine. An N-linked (GlcNAc...) asparagine glycan is attached at Asn59. A disulfide bond links Cys75 and Cys86. N-linked (GlcNAc...) asparagine glycosylation is found at Asn91, Asn100, Asn112, Asn132, Asn262, Asn303, Asn315, and Asn335. Residues Asp414 and His416 each contribute to the Zn(2+) site. Positions 419 to 423 (WSEWS) match the WSXWS motif motif. A helical membrane pass occupies residues 439-459 (MIVWIVLGVLSSLICLIMSWT). Over 460-831 (MVLKGYRMIT…DPSSFMPSFK (372 aa)) the chain is Cytoplasmic. The Box 1 motif signature appears at 471–479 (ILPPVPGPK). 2 disordered regions span residues 527-563 (HQLM…SPSL) and 776-831 (HTPT…PSFK). Positions 545-554 (TLKETDRDSG) are enriched in basic and acidic residues. A compositionally biased stretch (polar residues) spans 777–803 (TPTSQEEPAKETSQNPQQGQVETNMSY).

Belongs to the type I cytokine receptor family. Type 1 subfamily.

It localises to the membrane. Functionally, this is a receptor for the anterior pituitary hormone prolactin. The chain is Prolactin receptor (PRLR) from Meleagris gallopavo (Wild turkey).